Consider the following 215-residue polypeptide: Ras-related protein SEC4 (215 aa).

GTP is bound at residue 27–34 (GDSGVGKS). The short motif at 49 to 57 (FITTIGIDF) is the Effector region element. GTP is bound by residues 75-79 (DTAGQ) and 133-136 (NKSD). A phosphoserine mark is found at S201 and S204. S-geranylgeranyl cysteine attachment occurs at residues C214 and C215.

Belongs to the small GTPase superfamily. Rab family. Interacts with the guanyl-nucleotide exchange factor SEC2. Interacts with SRO7, YIF1, YIP3, YIP4 and YIP5.

It is found in the cytoplasmic vesicle. It localises to the secretory vesicle membrane. Its subcellular location is the cell membrane. The protein localises to the cytoplasm. Functionally, involved in exocytosis. Maybe by regulating the binding and fusion of secretory vesicles with the cell surface. The GTP-bound form of SEC4 may interact with an effector, thereby stimulating its activity and leading to exocytotic fusion. SEC4 may be an upstream activator of the 19.5S SEC8/SEC15 particle. SEC4 probably interacts directly with SEC8; it could serve as the attachment site for the SEC8/SEC15 particle. In Saccharomyces cerevisiae (strain ATCC 204508 / S288c) (Baker's yeast), this protein is Ras-related protein SEC4 (SEC4).